A 625-amino-acid polypeptide reads, in one-letter code: MAIRQLPEMLINQIAAGEVVERPASVVKELVENALDAGATRVDIELEEGGVRLIRIRDNGGGIAPDELPLAVSRHATSKIASLDDLETVATLGFRGEALPSIASVSRFTLTSRRHDAEHGSALEIDGGRLGEVVPRAHAPGTTVEVRELFFNVPARRKFLRAERTELGHIEEWLRSLALARPDVELRVSHNGKPSRRYKPGDLYSDARLGETLGEDFARQALRVDHSGAGLRLHGWVAQPHYSRASTDQQYLYVNGRSVRDRSVAHAVKMAYGDVLFHGRQPAYVLFLELDPARVDVNVHPAKHEVRFREARLIHDFVYRTLQDALAHTRAGATPNSIGSDGAGYTGATAGEMGNIASGGPANHGNAPGRSGSAYSYANWTPSQTPLGLRVDEARAAYSALYAPPPRNAPQSTGMPSMAGTGLPATSEDSGVPPLGYAIAQLHGIYILAENAEGLIVVDMHAAHERIVYERLKNAHDSIGLHAQPLLVPMTLAVGEREADTAEREADTLATLGFEITRAGPQSLHVRSIPALLANAEPEALLRDVLGDLREHGQSCRIASARDELLSTMACHGAVRANRRLTVPEMNALLRDMEATERSGQCNHGRPTWARFTLSDIDRWFLRGR.

A disordered region spans residues 404 to 427 (PPPRNAPQSTGMPSMAGTGLPATS).

Belongs to the DNA mismatch repair MutL/HexB family.

Functionally, this protein is involved in the repair of mismatches in DNA. It is required for dam-dependent methyl-directed DNA mismatch repair. May act as a 'molecular matchmaker', a protein that promotes the formation of a stable complex between two or more DNA-binding proteins in an ATP-dependent manner without itself being part of a final effector complex. The protein is DNA mismatch repair protein MutL of Xanthomonas oryzae pv. oryzae (strain MAFF 311018).